The following is a 374-amino-acid chain: Protein RecA (374 aa).

77 to 84 (GPESSGKT) contacts ATP. The segment at 355–374 (AAKTAAADKSAPAKASEAAA) is disordered.

It belongs to the RecA family.

It localises to the cytoplasm. Its function is as follows. Can catalyze the hydrolysis of ATP in the presence of single-stranded DNA, the ATP-dependent uptake of single-stranded DNA by duplex DNA, and the ATP-dependent hybridization of homologous single-stranded DNAs. It interacts with LexA causing its activation and leading to its autocatalytic cleavage. The chain is Protein RecA from Synechococcus sp. (strain CC9605).